We begin with the raw amino-acid sequence, 358 residues long: Feruloyl CoA ortho-hydroxylase F6H1-2 (358 aa).

The region spanning 200 to 308 (TKESLLMGSK…RISVPIFVNP (109 aa)) is the Fe2OG dioxygenase domain. A 2-oxoglutarate-binding site is contributed by tyrosine 216. Fe cation contacts are provided by histidine 231, aspartate 233, and histidine 289. Positions 299 and 301 each coordinate 2-oxoglutarate.

This sequence belongs to the iron/ascorbate-dependent oxidoreductase family. L-ascorbate is required as a cofactor. The cofactor is Fe(2+). In terms of tissue distribution, expressed at low levels in tubers, underground stems, leaves and petioles.

It carries out the reaction (E)-feruloyl-CoA + 2-oxoglutarate + O2 = (E)-6-hydroxyferuloyl-CoA + succinate + CO2. It participates in phenylpropanoid metabolism. Its function is as follows. 2-oxoglutarate (OG)- and Fe(II)-dependent dioxygenase (2OGD) involved in scopoletin biosynthesis. Converts feruloyl CoA into 6'-hydroxyferuloyl CoA, and, at low efficiency, caffeoyl-CoA into 6'-hydroxycaffeate, but has no activity with p-coumaroyl-CoA. In Ipomoea batatas (Sweet potato), this protein is Feruloyl CoA ortho-hydroxylase F6H1-2.